We begin with the raw amino-acid sequence, 279 residues long: Large ribosomal subunit protein uL2 (279 aa).

Disordered stretches follow at residues methionine 1–arginine 43 and lysine 207–histidine 279. The segment covering proline 8–serine 22 has biased composition (polar residues). Residues glutamate 23–leucine 33 are compositionally biased toward basic and acidic residues. A compositionally biased stretch (polar residues) spans leucine 34–arginine 43. Basic residues-rich tracts occupy residues glycine 209 to threonine 219 and threonine 254 to histidine 279.

Belongs to the universal ribosomal protein uL2 family. Part of the 50S ribosomal subunit. Forms a bridge to the 30S subunit in the 70S ribosome.

Its function is as follows. One of the primary rRNA binding proteins. Required for association of the 30S and 50S subunits to form the 70S ribosome, for tRNA binding and peptide bond formation. It has been suggested to have peptidyltransferase activity; this is somewhat controversial. Makes several contacts with the 16S rRNA in the 70S ribosome. The chain is Large ribosomal subunit protein uL2 from Lactiplantibacillus plantarum (strain ATCC BAA-793 / NCIMB 8826 / WCFS1) (Lactobacillus plantarum).